Consider the following 224-residue polypeptide: 4'-phosphopantetheinyl transferase ffp (224 aa).

3 residues coordinate Mg(2+): aspartate 107, glutamate 109, and glutamate 151. Residues 158–189 are peptidyl carrier protein binding; sequence GKGLSLPLDSFSVRLHEDGRVSVELPEHHTPC.

The protein belongs to the P-Pant transferase superfamily. Gsp/Sfp/HetI/AcpT family. Mg(2+) is required as a cofactor.

The enzyme catalyses apo-[peptidyl-carrier protein] + CoA = holo-[peptidyl-carrier protein] + adenosine 3',5'-bisphosphate + H(+). Functionally, may activate the peptidyl carrier protein (PCP) domains of fengycin synthase by transferring the 4'-phosphopantetheinyl moiety of coenzyme A (CoA) to a serine residue. The sequence is that of 4'-phosphopantetheinyl transferase ffp (ffp) from Bacillus subtilis.